The chain runs to 192 residues: Ethylene-responsive transcription factor ERF027 (192 aa).

Positions 18 to 74 (VYRGIRCRSGKWVSEIREPRKTTRIWLGTYPMAEMAAAAYDVAAMALKGREAVLNFP) form a DNA-binding region, AP2/ERF. 2 disordered regions span residues 104 to 132 (CEEG…HVDN) and 167 to 192 (APPS…LWGY). Residues 179-192 (DSPENSNDEDLWGY) show a composition bias toward acidic residues.

This sequence belongs to the AP2/ERF transcription factor family. ERF subfamily.

It localises to the nucleus. Its function is as follows. Probably acts as a transcriptional activator. Binds to the GCC-box pathogenesis-related promoter element. May be involved in the regulation of gene expression by stress factors and by components of stress signal transduction pathways. This chain is Ethylene-responsive transcription factor ERF027 (ERF027), found in Arabidopsis thaliana (Mouse-ear cress).